The primary structure comprises 223 residues: Ribosomal RNA small subunit methyltransferase G (223 aa).

S-adenosyl-L-methionine-binding positions include G83, L88, 134–135 (AE), and R152.

The protein belongs to the methyltransferase superfamily. RNA methyltransferase RsmG family.

The protein localises to the cytoplasm. Specifically methylates the N7 position of guanine in position 518 of 16S rRNA. The polypeptide is Ribosomal RNA small subunit methyltransferase G (Corynebacterium diphtheriae (strain ATCC 700971 / NCTC 13129 / Biotype gravis)).